The chain runs to 39 residues: Photosystem II reaction center protein L (39 aa).

The chain crosses the membrane as a helical span at residues 18–38; sequence SLYLGLLLTFVMGILFSSYFF.

The protein belongs to the PsbL family. PSII is composed of 1 copy each of membrane proteins PsbA, PsbB, PsbC, PsbD, PsbE, PsbF, PsbH, PsbI, PsbJ, PsbK, PsbL, PsbM, PsbT, PsbX, PsbY, Psb30/Ycf12, peripheral proteins PsbO, CyanoQ (PsbQ), PsbU, PsbV and a large number of cofactors. It forms dimeric complexes.

Its subcellular location is the cellular thylakoid membrane. One of the components of the core complex of photosystem II (PSII). PSII is a light-driven water:plastoquinone oxidoreductase that uses light energy to abstract electrons from H(2)O, generating O(2) and a proton gradient subsequently used for ATP formation. It consists of a core antenna complex that captures photons, and an electron transfer chain that converts photonic excitation into a charge separation. This subunit is found at the monomer-monomer interface and is required for correct PSII assembly and/or dimerization. The protein is Photosystem II reaction center protein L of Prochlorococcus marinus (strain MIT 9211).